A 235-amino-acid polypeptide reads, in one-letter code: Pyridoxine 5'-phosphate synthase (235 aa).

Residue N6 participates in 3-amino-2-oxopropyl phosphate binding. Residue 8 to 9 participates in 1-deoxy-D-xylulose 5-phosphate binding; that stretch reads DH. Position 17 (R17) interacts with 3-amino-2-oxopropyl phosphate. Catalysis depends on H42, which acts as the Proton acceptor. Residues R44 and H49 each contribute to the 1-deoxy-D-xylulose 5-phosphate site. E69 (proton acceptor) is an active-site residue. 1-deoxy-D-xylulose 5-phosphate is bound at residue T99. The active-site Proton donor is H189. Residues G190 and 211–212 each bind 3-amino-2-oxopropyl phosphate; that span reads GH.

This sequence belongs to the PNP synthase family. Homooctamer; tetramer of dimers.

It localises to the cytoplasm. The enzyme catalyses 3-amino-2-oxopropyl phosphate + 1-deoxy-D-xylulose 5-phosphate = pyridoxine 5'-phosphate + phosphate + 2 H2O + H(+). Its pathway is cofactor biosynthesis; pyridoxine 5'-phosphate biosynthesis; pyridoxine 5'-phosphate from D-erythrose 4-phosphate: step 5/5. Catalyzes the complicated ring closure reaction between the two acyclic compounds 1-deoxy-D-xylulose-5-phosphate (DXP) and 3-amino-2-oxopropyl phosphate (1-amino-acetone-3-phosphate or AAP) to form pyridoxine 5'-phosphate (PNP) and inorganic phosphate. The polypeptide is Pyridoxine 5'-phosphate synthase (Chlorobium phaeovibrioides (strain DSM 265 / 1930) (Prosthecochloris vibrioformis (strain DSM 265))).